The following is a 231-amino-acid chain: Flagellar L-ring protein (231 aa).

The N-terminal stretch at 1–18 (MNRFICVLALSGSAVLAG) is a signal peptide. The N-palmitoyl cysteine moiety is linked to residue Cys-19. The S-diacylglycerol cysteine moiety is linked to residue Cys-19.

It belongs to the FlgH family. As to quaternary structure, the basal body constitutes a major portion of the flagellar organelle and consists of four rings (L,P,S, and M) mounted on a central rod.

Its subcellular location is the cell outer membrane. The protein resides in the bacterial flagellum basal body. Functionally, assembles around the rod to form the L-ring and probably protects the motor/basal body from shearing forces during rotation. The sequence is that of Flagellar L-ring protein from Pseudomonas fluorescens (strain ATCC BAA-477 / NRRL B-23932 / Pf-5).